We begin with the raw amino-acid sequence, 136 residues long: Ribosome-binding factor A (136 aa).

It belongs to the RbfA family. As to quaternary structure, monomer. Binds 30S ribosomal subunits, but not 50S ribosomal subunits or 70S ribosomes.

The protein localises to the cytoplasm. In terms of biological role, one of several proteins that assist in the late maturation steps of the functional core of the 30S ribosomal subunit. Associates with free 30S ribosomal subunits (but not with 30S subunits that are part of 70S ribosomes or polysomes). Required for efficient processing of 16S rRNA. May interact with the 5'-terminal helix region of 16S rRNA. This chain is Ribosome-binding factor A, found in Rhodopseudomonas palustris (strain BisB5).